A 605-amino-acid chain; its full sequence is Elongation factor 4 (605 aa).

The 183-residue stretch at 10–192 folds into the tr-type G domain; sequence KNIRNFAIVA…AIVMRLPPPH (183 aa). GTP is bound by residues 22-27 and 139-142; these read DHGKST and NKVD.

Belongs to the TRAFAC class translation factor GTPase superfamily. Classic translation factor GTPase family. LepA subfamily.

The protein localises to the cell inner membrane. It carries out the reaction GTP + H2O = GDP + phosphate + H(+). Its function is as follows. Required for accurate and efficient protein synthesis under certain stress conditions. May act as a fidelity factor of the translation reaction, by catalyzing a one-codon backward translocation of tRNAs on improperly translocated ribosomes. Back-translocation proceeds from a post-translocation (POST) complex to a pre-translocation (PRE) complex, thus giving elongation factor G a second chance to translocate the tRNAs correctly. Binds to ribosomes in a GTP-dependent manner. The sequence is that of Elongation factor 4 from Chelativorans sp. (strain BNC1).